Consider the following 304-residue polypeptide: Splicing factor U2af small subunit B (304 aa).

The segment at E12–P40 adopts a C3H1-type 1 zinc-finger fold. The RRM domain maps to P44 to V146. Residues D148–Q175 form a C3H1-type 2 zinc finger. Residues L184–N207 are compositionally biased toward basic residues. A disordered region spans residues L184–P304. Basic and acidic residues predominate over residues R208–Y220. Residues R221 to S258 show a composition bias toward gly residues. Over residues R268–S280 the composition is skewed to basic residues. The span at P281–P304 shows a compositional bias: basic and acidic residues.

It belongs to the splicing factor SR family.

It localises to the nucleus. Functionally, necessary for the splicing of pre-mRNA. The polypeptide is Splicing factor U2af small subunit B (U2AF35B) (Oryza sativa subsp. japonica (Rice)).